The following is a 500-amino-acid chain: MEFTIKTATPEKVRTGVLVVGLFADGILPPAAHAVDKASKGKLAQLVKRGDLDEKAGAAVMLHDLAGIAAERVLVVSLGKSAEFSDKAYRDALNSVAKALASGVAKVAAVAIADAELDGRTLAWRLQQATRQIADGAYRFDAPKAGAKDAKKERGARKITLLIGDKVSDELEAAVRRGQAVAEGMALAKDLGNLPGNVCTPAYLADTAEALGKQFKFDVEVLERADMEKLGMGSLLSVAKGSHIPPKFIVMHYKGGKSKAKPVVLVGKGITFDTGGISLKPGAEMDEMKYDMCGAASVLGTFKAIARMALPLNVVGIVPATENMPGGNATRPGDVVTSMSGQTIEILNTDAEGRLILCDALTYAERFKPACVIDIATLTGACVVALGKIPSGLLANDDDLAAELLKRGTESGDRAWQLPLWDEYQDLLKSNFADMANIGGRYGGTITAACFLARFTKAYKWAHLDIAGTAWVSGDAKGATGRPVPLLAEFLVGRAAAKAD.

Mn(2+) contacts are provided by Lys-268 and Asp-273. Residue Lys-280 is part of the active site. Positions 291, 350, and 352 each coordinate Mn(2+). Arg-354 is a catalytic residue.

It belongs to the peptidase M17 family. Mn(2+) is required as a cofactor.

Its subcellular location is the cytoplasm. It catalyses the reaction Release of an N-terminal amino acid, Xaa-|-Yaa-, in which Xaa is preferably Leu, but may be other amino acids including Pro although not Arg or Lys, and Yaa may be Pro. Amino acid amides and methyl esters are also readily hydrolyzed, but rates on arylamides are exceedingly low.. It carries out the reaction Release of an N-terminal amino acid, preferentially leucine, but not glutamic or aspartic acids.. In terms of biological role, presumably involved in the processing and regular turnover of intracellular proteins. Catalyzes the removal of unsubstituted N-terminal amino acids from various peptides. The chain is Probable cytosol aminopeptidase from Azoarcus sp. (strain BH72).